The following is a 91-amino-acid chain: UPF0250 protein BB0170 (91 aa).

The protein belongs to the UPF0250 family.

This is UPF0250 protein BB0170 from Bordetella bronchiseptica (strain ATCC BAA-588 / NCTC 13252 / RB50) (Alcaligenes bronchisepticus).